Reading from the N-terminus, the 185-residue chain is Ribosome-recycling factor (185 aa).

This sequence belongs to the RRF family.

The protein localises to the cytoplasm. Its function is as follows. Responsible for the release of ribosomes from messenger RNA at the termination of protein biosynthesis. May increase the efficiency of translation by recycling ribosomes from one round of translation to another. The polypeptide is Ribosome-recycling factor (Enterococcus faecalis (strain ATCC 700802 / V583)).